A 440-amino-acid chain; its full sequence is Thymidine phosphorylase (440 aa).

The protein belongs to the thymidine/pyrimidine-nucleoside phosphorylase family. As to quaternary structure, homodimer.

It catalyses the reaction thymidine + phosphate = 2-deoxy-alpha-D-ribose 1-phosphate + thymine. It participates in pyrimidine metabolism; dTMP biosynthesis via salvage pathway; dTMP from thymine: step 1/2. Its function is as follows. The enzymes which catalyze the reversible phosphorolysis of pyrimidine nucleosides are involved in the degradation of these compounds and in their utilization as carbon and energy sources, or in the rescue of pyrimidine bases for nucleotide synthesis. The chain is Thymidine phosphorylase from Cronobacter sakazakii (strain ATCC BAA-894) (Enterobacter sakazakii).